Consider the following 992-residue polypeptide: Translation initiation factor IF-2 (992 aa).

Disordered stretches follow at residues Arg-154–Ala-173 and Ala-338–Ser-399. The tr-type G domain occupies Pro-492 to Lys-661. Residues Gly-501–Thr-508 are G1. A GTP-binding site is contributed by Gly-501 to Thr-508. The interval Gly-526–His-530 is G2. Positions Asp-547–Gly-550 are G3. GTP-binding positions include Asp-547–His-551 and Asn-601–Asp-604. The tract at residues Asn-601–Asp-604 is G4. The interval Ser-637–His-639 is G5.

Belongs to the TRAFAC class translation factor GTPase superfamily. Classic translation factor GTPase family. IF-2 subfamily.

The protein localises to the cytoplasm. Functionally, one of the essential components for the initiation of protein synthesis. Protects formylmethionyl-tRNA from spontaneous hydrolysis and promotes its binding to the 30S ribosomal subunits. Also involved in the hydrolysis of GTP during the formation of the 70S ribosomal complex. The chain is Translation initiation factor IF-2 from Polaromonas naphthalenivorans (strain CJ2).